The primary structure comprises 137 residues: Phosphomevalonate dehydratase small subunit (137 aa).

Ser-62 functions as the Proton acceptor in the catalytic mechanism.

It belongs to the AcnX type II small subunit family. As to quaternary structure, heterodimer composed of a large subunit (PMDh-L) and a small subunit (PMDh-S).

The enzyme catalyses (R)-5-phosphomevalonate = (2E)-3-methyl-5-phosphooxypent-2-enoate + H2O. It participates in isoprenoid biosynthesis; isopentenyl diphosphate biosynthesis via mevalonate pathway. Functionally, component of a hydro-lyase that catalyzes the dehydration of mevalonate 5-phosphate (MVA5P) to form trans-anhydromevalonate 5-phosphate (tAHMP). Involved in the archaeal mevalonate (MVA) pathway, which provides fundamental precursors for isoprenoid biosynthesis, such as isopentenyl diphosphate (IPP) and dimethylallyl diphosphate (DMAPP). This Methanothrix thermoacetophila (strain DSM 6194 / JCM 14653 / NBRC 101360 / PT) (Methanosaeta thermophila) protein is Phosphomevalonate dehydratase small subunit.